The chain runs to 156 residues: Small ribosomal subunit protein uS7 (156 aa).

It belongs to the universal ribosomal protein uS7 family. Part of the 30S ribosomal subunit. Contacts proteins S9 and S11.

Its function is as follows. One of the primary rRNA binding proteins, it binds directly to 16S rRNA where it nucleates assembly of the head domain of the 30S subunit. Is located at the subunit interface close to the decoding center, probably blocks exit of the E-site tRNA. The sequence is that of Small ribosomal subunit protein uS7 from Mannheimia succiniciproducens (strain KCTC 0769BP / MBEL55E).